The following is a 323-amino-acid chain: Transcription factor MafB (323 aa).

Lys32 participates in a covalent cross-link: Glycyl lysine isopeptide (Lys-Gly) (interchain with G-Cter in SUMO). The segment covering 34–43 (EPLGRAERPG) has biased composition (basic and acidic residues). Disordered regions lie at residues 34 to 78 (EPLG…PTEP) and 116 to 210 (PVPQ…VEDR). Over residues 54–77 (SVSSTPLSTPCSSVPSSPSFSPTE) the composition is skewed to low complexity. Basic residues-rich tracts occupy residues 129 to 143 (SAHH…HPHH) and 159 to 168 (AHPHHHHHHQ). A compositionally biased stretch (low complexity) spans 192-201 (PHATAAATAA). The basic motif stretch occupies residues 238–263 (RLKQKRRTLKNRGYAQSCRYKRVQQK). Residues 238 to 301 (RLKQKRRTLK…DAYKVKCEKL (64 aa)) enclose the bZIP domain. Residues 266–287 (LENEKTQLIQQVEQLKQEVSRL) are leucine-zipper. A Glycyl lysine isopeptide (Lys-Gly) (interchain with G-Cter in SUMO) cross-link involves residue Lys297.

Belongs to the bZIP family. Maf subfamily. As to quaternary structure, homodimer or heterodimer with other bHLH-Zip transcription factors. Forms homodimers and heterodimers with FOS, FOSB and FOSL2, but not with JUN proteins (JUN, JUNB and JUND). Interacts with the intracellular cytoplasmic domain of LRP1 (LRPICD); the interaction results in a moderate reduction of MAFB transcriptional potential. Binds DNA as a homodimer or a heterodimer. Interacts with PAX6; the interaction is direct. Interacts with ETS1 and LRP1. Post-translationally, sumoylated. Sumoylation on Lys-32 and Lys-297 stimulates its transcriptional repression activity and promotes macrophage differentiation from myeloid progenitors. In terms of tissue distribution, expressed in pancreatic alpha-cells (glucagon-positive cells), in podocytes of the kidney and macrophages (at protein level). Most abundant in kidney, gut, lung and brain.

It localises to the nucleus. Acts as a transcriptional activator or repressor. Plays a pivotal role in regulating lineage-specific hematopoiesis by repressing ETS1-mediated transcription of erythroid-specific genes in myeloid cells. Required for monocytic, macrophage, osteoclast, podocyte and islet beta cell differentiation. Involved in renal tubule survival and F4/80 maturation. Activates the insulin and glucagon promoters. Together with PAX6, transactivates weakly the glucagon gene promoter through the G1 element. SUMO modification controls its transcriptional activity and ability to specify macrophage fate. Binds element G1 on the glucagon promoter. Involved either as an oncogene or as a tumor suppressor, depending on the cell context. Required for the transcriptional activation of HOXB3 in the rhombomere r5 in the hindbrain. The polypeptide is Transcription factor MafB (Mafb) (Mus musculus (Mouse)).